We begin with the raw amino-acid sequence, 751 residues long: C2 domain-containing protein At1g53590 (751 aa).

A run of 2 helical transmembrane segments spans residues 2 to 22 and 26 to 46; these read ESSL…ISSL and HAFF…RYVM. The SMP-LTD domain occupies 68–262; it reads DSESVRWMNY…QPNMLVVDME (195 aa). Positions 267-381 constitute a C2 domain; that stretch reads PTSENWFFVD…RGGQRNDMWL (115 aa). Positions 298, 304, 352, 354, and 359 each coordinate Ca(2+). 2 disordered regions span residues 469–519 and 572–751; these read QIWE…GRGL and SGPL…SSSK. Positions 472-482 are enriched in basic and acidic residues; it reads EPRKGKSRRLD. The segment covering 483–502 has biased composition (polar residues); the sequence is SQIQRTPNDESLSNGSSSTD. Over residues 590–611 the composition is skewed to basic and acidic residues; the sequence is NSGKGHMKDVAKSFLKQAEKSA. The segment covering 612–624 has biased composition (basic residues); sequence KQIKHAFSRKGSM. A compositionally biased stretch (basic and acidic residues) spans 625–634; that stretch reads KPRDGHKEIV. Positions 639-651 are enriched in acidic residues; it reads SGTDSESSDDDDA. Basic and acidic residues-rich tracts occupy residues 664–681 and 703–751; these read KLTR…DHVD and VEAK…SSSK. Residues 701–728 adopt a coiled-coil conformation; it reads TDVEAKEEKLKEAAESETRDMDTAMNIK.

This sequence belongs to the extended synaptotagmin family. The cofactor is Ca(2+).

It is found in the membrane. This Arabidopsis thaliana (Mouse-ear cress) protein is C2 domain-containing protein At1g53590 (NTMC2T6.1).